The chain runs to 276 residues: ADP-dependent (S)-NAD(P)H-hydrate dehydratase (276 aa).

Residues 5 to 269 (TPKAMCAWIP…EELPTYLKIF (265 aa)) enclose the YjeF C-terminal domain. 3 residues coordinate (6S)-NADPHX: A40, G103, and H152. G211 contributes to the AMP binding site. A (6S)-NADPHX-binding site is contributed by D212.

This sequence belongs to the NnrD/CARKD family. Homotetramer. Mg(2+) serves as cofactor.

It catalyses the reaction (6S)-NADHX + ADP = AMP + phosphate + NADH + H(+). The catalysed reaction is (6S)-NADPHX + ADP = AMP + phosphate + NADPH + H(+). Its function is as follows. Catalyzes the dehydration of the S-form of NAD(P)HX at the expense of ADP, which is converted to AMP. Together with NAD(P)HX epimerase, which catalyzes the epimerization of the S- and R-forms, the enzyme allows the repair of both epimers of NAD(P)HX, a damaged form of NAD(P)H that is a result of enzymatic or heat-dependent hydration. This Listeria monocytogenes serovar 1/2a (strain ATCC BAA-679 / EGD-e) protein is ADP-dependent (S)-NAD(P)H-hydrate dehydratase.